We begin with the raw amino-acid sequence, 892 residues long: Smad protein daf-3 (892 aa).

Disordered stretches follow at residues 1 to 43 (MGDH…GLED) and 135 to 161 (PYLD…FDTK). Residues 15 to 26 (IPPQFNYSQPGT) show a composition bias toward polar residues. An MH1 domain is found at 198–347 (KIVEYLMYYR…YEIVIGTMIV (150 aa)). The disordered stretch occupies residues 505–552 (YPDFHHPFNQQPHQPPQLSQNHTSQQGSHQPGHQGQVPNDPPISRPVL). Low complexity predominate over residues 528–540 (SQQGSHQPGHQGQ). The MH2 domain maps to 657-880 (WGTIVYYEKN…TNCFEPLGME (224 aa)).

Belongs to the dwarfin/SMAD family. In terms of assembly, interacts with R-SMADs daf-8 and daf-14. Interacts with daf-14 in a daf-8 dependent manner. May interact with daf-5.

Its subcellular location is the cytoplasm. The protein localises to the nucleus. It localises to the chromosome. Functionally, transcriptional regulator and common SMAD (co-SMAD), required to regulate entry into a developmentally arrested larval state known as dauer, in response to harsh environmental conditions. Probable component of transcriptional regulatory complex with SMAD protein daf-5. Acts antagonistically to SMAD signaling downstream of TGF-beta-like daf-7 signaling. Binds to the 5'-GTCTG-3' motif found in regulatory regions and may modulate the expression of genes involved in TGF-beta-like daf-7 and Notch lag-2 signaling. May regulate gene expression outside the dauer pathway. The protein is Smad protein daf-3 of Caenorhabditis elegans.